We begin with the raw amino-acid sequence, 437 residues long: uncharacterized protein (437 aa).

Composition is skewed to basic residues over residues 1-29 (MDTPLRGRRAAGRGVRARARPRTRRRHRN), 81-91 (LRGRHPRVRRV), and 101-118 (RRRHLLRRRVGGHRGRNR). Disordered regions lie at residues 1-31 (MDTPLRGRRAAGRGVRARARPRTRRRHRNDH) and 77-437 (EHVP…QGTR). Residues 119 to 132 (HAGDRRAPGVDSRL) show a composition bias toward basic and acidic residues. The span at 133–142 (RQQHQHPRGR) shows a compositional bias: basic residues. Positions 143–164 (HASDRVQDGAHPRRQRLREQPR) are enriched in basic and acidic residues. Over residues 165–190 (HAGRPRRRQPPRRGRSRGTHRRHLRQ) the composition is skewed to basic residues. Basic and acidic residues-rich tracts occupy residues 198–209 (GPDEDQAREFRG) and 217–253 (HPPTARDVLRGEPGHGDGHHLEGRRGRPRPQGREAGR). 2 stretches are compositionally biased toward basic residues: residues 284–293 (TVHRGGRLRG) and 324–348 (PHSRKRRDTGAHHRHWRRRRRRVRH). Residues 371 to 382 (DAAAYASVPAHA) are compositionally biased toward low complexity.

This is an uncharacterized protein from Haloferax lucentense (strain DSM 14919 / JCM 9276 / NCIMB 13854 / Aa 2.2) (Haloferax alicantei).